An 89-amino-acid chain; its full sequence is Small ribosomal subunit protein uS15 (89 aa).

This sequence belongs to the universal ribosomal protein uS15 family. As to quaternary structure, part of the 30S ribosomal subunit. Forms a bridge to the 50S subunit in the 70S ribosome, contacting the 23S rRNA.

Its function is as follows. One of the primary rRNA binding proteins, it binds directly to 16S rRNA where it helps nucleate assembly of the platform of the 30S subunit by binding and bridging several RNA helices of the 16S rRNA. Forms an intersubunit bridge (bridge B4) with the 23S rRNA of the 50S subunit in the ribosome. This chain is Small ribosomal subunit protein uS15, found in Cyanothece sp. (strain PCC 7425 / ATCC 29141).